An 86-amino-acid chain; its full sequence is MGRTTKVGSAGRFGPRYGLKIRRRVAAVEARMKQKHVCPVCGRKAVRRISTGIWQCQKCGATFAGGAYLPTTPAGKVAKRVTASKA.

Zn(2+) is bound by residues Cys-38, Cys-41, Cys-56, and Cys-59. The C4-type zinc finger occupies 38-59; that stretch reads CPVCGRKAVRRISTGIWQCQKC.

This sequence belongs to the eukaryotic ribosomal protein eL43 family. Part of the 50S ribosomal subunit. Zn(2+) serves as cofactor.

The chain is Large ribosomal subunit protein eL43 from Thermococcus kodakarensis (strain ATCC BAA-918 / JCM 12380 / KOD1) (Pyrococcus kodakaraensis (strain KOD1)).